Consider the following 291-residue polypeptide: 4-hydroxy-tetrahydrodipicolinate synthase (291 aa).

Thr-44 lines the pyruvate pocket. Tyr-132 functions as the Proton donor/acceptor in the catalytic mechanism. Residue Lys-160 is the Schiff-base intermediate with substrate of the active site. Pyruvate is bound at residue Val-202.

This sequence belongs to the DapA family. Homotetramer; dimer of dimers.

It is found in the cytoplasm. It carries out the reaction L-aspartate 4-semialdehyde + pyruvate = (2S,4S)-4-hydroxy-2,3,4,5-tetrahydrodipicolinate + H2O + H(+). The protein operates within amino-acid biosynthesis; L-lysine biosynthesis via DAP pathway; (S)-tetrahydrodipicolinate from L-aspartate: step 3/4. Functionally, catalyzes the condensation of (S)-aspartate-beta-semialdehyde [(S)-ASA] and pyruvate to 4-hydroxy-tetrahydrodipicolinate (HTPA). This is 4-hydroxy-tetrahydrodipicolinate synthase from Clostridium perfringens (strain SM101 / Type A).